The chain runs to 58 residues: Proteinase inhibitor PSKP-2 (58 aa).

Residues 1–58 (VIEPDCKKYEGKKCPPDIALVCGTNGREYYNECALCVFIRDSTLKADKAIKIKKWGKC) form the Kazal-like domain. 3 disulfides stabilise this stretch: Cys-6–Cys-36, Cys-14–Cys-33, and Cys-22–Cys-58.

Skin.

Its subcellular location is the secreted. In terms of biological role, may have a role in mucosal defense against microbes by interacting directly with their membranes. The polypeptide is Proteinase inhibitor PSKP-2 (Phyllomedusa sauvagei (Sauvage's leaf frog)).